Here is a 27-residue protein sequence, read N- to C-terminus: U1-poneritoxin-Na3b (27 aa).

The protein belongs to the ponericin-G family. As to expression, expressed by the venom gland.

Its subcellular location is the secreted. Its function is as follows. Shows a broad spectrum of activity against both Gram-positive and Gram-negative bacteria. Also has antimicrobial activity against S.cerevisiae. Has insecticidal and non-hemolytic activity. The chain is U1-poneritoxin-Na3b from Neoponera apicalis (Ant).